The primary structure comprises 309 residues: Tagatose-6-phosphate kinase (309 aa).

The protein belongs to the carbohydrate kinase PfkB family. LacC subfamily.

It carries out the reaction D-tagatofuranose 6-phosphate + ATP = D-tagatofuranose 1,6-bisphosphate + ADP + H(+). It participates in carbohydrate metabolism; D-tagatose 6-phosphate degradation; D-glyceraldehyde 3-phosphate and glycerone phosphate from D-tagatose 6-phosphate: step 1/2. The protein is Tagatose-6-phosphate kinase of Streptococcus pyogenes serotype M1.